The following is a 341-amino-acid chain: GDP-fucose transporter 1 (341 aa).

10 helical membrane passes run 17-37 (LVIG…LAIT), 41-61 (YPGL…YLLG), 71-91 (FTWD…LAIF), 103-123 (DTFI…DTVF), 132-152 (LTFL…ATDS), 156-176 (LTAY…MVYI), 187-207 (IWGL…VFWF), 231-251 (AFSS…FGFA), 260-280 (AFTV…VLIW), and 283-303 (HATP…VGYQ). The tract at residues 316-341 (SEKDSEKGEEDEELTQLVPGKLASVV) is disordered.

Belongs to the nucleotide-sugar transporter family. GDP-Mannose:GMP antiporter (GMA) (TC 2.A.7.13) subfamily. Ubiquitous.

Its subcellular location is the golgi apparatus membrane. In terms of biological role, acts as the major nucleotide-sugar transporter for the import of GDP-Fucose into the Golgi lumen. Transports GDP-Fucose in a strict counter-exchange mode. Is required for proper plant growth and development. Also acts as a GDP-mannose transporter that may be involved in the import of GDP-mannose from the cytoplasm into the Golgi lumen. This is GDP-fucose transporter 1 from Arabidopsis thaliana (Mouse-ear cress).